The chain runs to 90 residues: DNA-binding protein HU (90 aa).

The residue at position 4 (Thr-4) is a Phosphothreonine. A disordered region spans residues 56 to 90 (AARKGRNPQTGEEMEIPASKVPAFKPGKALKDAVK).

It belongs to the bacterial histone-like protein family. As to quaternary structure, homodimer.

Its function is as follows. Histone-like DNA-binding protein which is capable of wrapping DNA to stabilize it, and thus to prevent its denaturation under extreme environmental conditions. The protein is DNA-binding protein HU (hup) of Geobacillus stearothermophilus (Bacillus stearothermophilus).